The chain runs to 381 residues: L-lactate dehydrogenase (381 aa).

Residues 1 to 380 (MIISSASDYR…KPEALVDLSK (380 aa)) form the FMN hydroxy acid dehydrogenase domain. Y24 lines the substrate pocket. Residues S106 and Q127 each contribute to the FMN site. Substrate is bound at residue Y129. FMN is bound at residue T155. R164 contributes to the substrate binding site. FMN is bound at residue K251. Catalysis depends on H275, which acts as the Proton acceptor. R278 provides a ligand contact to substrate. 306–330 (DSGIRNGLDIVRMLALGADATMLGR) contacts FMN.

This sequence belongs to the FMN-dependent alpha-hydroxy acid dehydrogenase family. Requires FMN as cofactor.

Its subcellular location is the cell inner membrane. It catalyses the reaction (S)-lactate + A = pyruvate + AH2. Catalyzes the conversion of L-lactate to pyruvate. Is coupled to the respiratory chain. This chain is L-lactate dehydrogenase, found in Haemophilus influenzae (strain ATCC 51907 / DSM 11121 / KW20 / Rd).